The primary structure comprises 105 residues: Large ribosomal subunit protein P2 (105 aa).

A disordered region spans residues Ala-84–Asp-105.

Belongs to the eukaryotic ribosomal protein P1/P2 family. As to quaternary structure, P1 and P2 exist as dimers at the large ribosomal subunit. Phosphorylated.

In terms of biological role, plays an important role in the elongation step of protein synthesis. This chain is Large ribosomal subunit protein P2 (ARP-1), found in Leishmania donovani.